The chain runs to 294 residues: Glutamate-binding protein GluB (294 aa).

The signal sequence occupies residues 1 to 26 (MSHKRMFTRLAAATSAAVLAGITLTA). C27 is lipidated: N-palmitoyl cysteine. A lipid anchor (S-diacylglycerol cysteine) is attached at C27.

The protein belongs to the bacterial solute-binding protein 3 family. As to quaternary structure, the complex is composed of two ATP-binding proteins (GluA), two transmembrane proteins (GluC and GluD) and a solute-binding protein (GluB).

Its subcellular location is the cell membrane. Functionally, part of the ABC transporter complex GluABCD involved in glutamate uptake. Binds glutamate with a high affinity. The sequence is that of Glutamate-binding protein GluB from Corynebacterium efficiens (strain DSM 44549 / YS-314 / AJ 12310 / JCM 11189 / NBRC 100395).